The chain runs to 477 residues: D-alanyl-D-alanine carboxypeptidase DacB (477 aa).

Residues M1 to A20 form the signal peptide. S62 functions as the Acyl-ester intermediate in the catalytic mechanism. K65 (proton acceptor) is an active-site residue. Residues G90–L263 form an absent in class-A beta-lactamases region. S306 is a catalytic residue. Position 417 (K417) interacts with substrate.

It belongs to the peptidase S13 family.

Its subcellular location is the periplasm. The enzyme catalyses Preferential cleavage: (Ac)2-L-Lys-D-Ala-|-D-Ala. Also transpeptidation of peptidyl-alanyl moieties that are N-acyl substituents of D-alanine.. Its pathway is cell wall biogenesis; peptidoglycan biosynthesis. Not involved in transpeptidation but exclusively catalyzes a DD-carboxypeptidase and DD-endopeptidase reaction. The chain is D-alanyl-D-alanine carboxypeptidase DacB (dacB) from Escherichia coli (strain K12).